A 398-amino-acid chain; its full sequence is Heat-inducible transcription repressor HrcA (398 aa).

The protein belongs to the HrcA family.

In terms of biological role, negative regulator of class I heat shock genes (grpE-dnaK-dnaJ and groELS operons). Prevents heat-shock induction of these operons. In Chlamydia pneumoniae (Chlamydophila pneumoniae), this protein is Heat-inducible transcription repressor HrcA.